A 92-amino-acid polypeptide reads, in one-letter code: MSSRRSRSRQSGSSRITDEQISDLVSKLQDLLPEARLRSNDRVPSSRVLQETCNYIRSLHQEVDDLSERLSELLATSDMSSAQAAIIRSLLM.

A disordered region spans residues methionine 1–glutamine 20. The bHLH domain occupies arginine 5–leucine 59.

Belongs to the bHLH protein family. Interacts with APG.

It localises to the nucleus. Its function is as follows. Atypical and probable non DNA-binding bHLH transcription factor that acts as a positive regulator of grain size. Binds the transcription repressor APG and forms a heterodimer of antagonistic bHLH transcription factors that regulates grain length and weight by controlling cell elongation in lemma and palea. May be involved in the control of lamina inclination through brassinosteroid signaling pathway. The sequence is that of Transcription factor ILI6 (ILI6) from Oryza sativa subsp. indica (Rice).